Consider the following 778-residue polypeptide: MPVQVLKIIKGKPETQLPSHLQREDLKHLQTGLDHTNKYFQGIVILSYPLTKLGDGTDFFKIVLQDDTCSRINSINVLMYGKMAEDCAKLIRNGDTFIVAGFKVAESPTAREDGRHACHLQVSEESGSAIFICTQPSITPFSEATSPSVAPKYVYTPLNCLKDGTVVNLYGIVKFFKPPYISKGTDYCSVVTLVDQSNVKLTCTLFNGNLDSLPKIYKNGDIVRFHRVKIREYNGQMQGITSAGFASLTFDGTVGAPVVPRASSKVYTFVDEEQKTVEELRIWAASNLSVSGPEAKLSDVKPMMFFDLTCQLVGKAKVDGSSFLLKVWDGTKCPYPTWKVPVEAKELEGDRVLLHHLRNLTVDVLVYDNHVQLAKSLKTGSFLRIYSIHTKQASAKNEDMSSHIEFHLHGGTCYGRGIGILPENNPDVEELKSFLECVELTDSQNMESVSSLELGDTFDSYTDLESPLQRCQQLSATVLTDHQDMSNTVLKTVLNSSAPQQYRIRAKLRSFKPQKLYQSVKLHCSKCNTLQEVPNGDAIDFILQGCAATAPNPELQSMSWYESVVWTTEEDQGRKITIHFVKHYEMLQRPENTLLMIEGGTLKEIWKLTRRFKCVIPVKSKEDDLELLDLSAPFLLQGNIKYYGCKKCSTPKSIKNLSSLAEKREPSWEPTEIAQVLGIEPLQYVFVMKFTLVDGTGVLNAYLFDYEKFFQIPASEILTNSFLQQKMEMTMNTLSPPGRKLDDLPWLECFIKSYNVADGMKHQVYYQIFDTTVAEDVV.

This sequence belongs to the telombin family. As to quaternary structure, homodimer or homooligomer. Component of the telomerase ribonucleoprotein complex. Binds single-stranded telomeric DNA as a monomer. Found in a complex with TERF1, TINF2 and TNKS1. Interacts with TNKS1.

The protein localises to the nucleus. Its subcellular location is the chromosome. The protein resides in the telomere. Its function is as follows. Component of the telomerase ribonucleoprotein (RNP) complex that is essential for the replication of chromosome termini. Is a component of the double-stranded telomeric DNA-binding TRF1 complex that is involved in the regulation of telomere length by cis-inhibition of telomerase. Also acts as a single-stranded telomeric DNA-binding protein and thus may act as a downstream effector of the TRF1 complex and may transduce information about telomere maintenance and/or length to the telomere terminus. Binds to at least two telomeric single-stranded 5'-TTAGGG-3' repeats (G-strand). Its activity is TERT dependent but it does not increase TERT activity. This Gallus gallus (Chicken) protein is Protection of telomeres protein 1 (POT1).